The primary structure comprises 544 residues: D-2-hydroxyglutarate dehydrogenase, mitochondrial (544 aa).

The N-terminal 10 residues, 1 to 10, are a transit peptide targeting the mitochondrion; that stretch reads MMMPRLVPRW. The FAD-binding PCMH-type domain occupies 119-298; sequence VRGSSKVLLR…TAVSILCPPK (180 aa). Lys-124 carries the post-translational modification N6-succinyllysine. Arg-409, Thr-413, and Lys-424 together coordinate (R)-2-hydroxyglutarate. Residue Arg-409 participates in (R)-lactate binding. (R)-malate contacts are provided by Arg-409, Thr-413, and Lys-424. Zn(2+) is bound by residues His-457 and His-464. Asn-466 serves as a coordination point for (R)-2-hydroxyglutarate. Position 498 (Glu-498) interacts with Zn(2+). A (R)-2-hydroxyglutarate-binding site is contributed by His-499. His-499 lines the (R)-lactate pocket. (R)-malate is bound at residue His-499.

Belongs to the FAD-binding oxidoreductase/transferase type 4 family. FAD serves as cofactor.

The protein resides in the mitochondrion. It catalyses the reaction (R)-2-hydroxyglutarate + A = 2-oxoglutarate + AH2. The catalysed reaction is (R)-malate + A = oxaloacetate + AH2. Activated by zinc and cobalt ions. Catalyzes the oxidation of D-2-hydroxyglutarate (D-2-HG) to alpha-ketoglutarate. Also catalyzes the oxidation of other D-2-hydroxyacids, such as D-malate (D-MAL) and D-lactate (D-LAC). Exhibits high activities towards D-2-HG and D-MAL but a very weak activity towards D-LAC. This is D-2-hydroxyglutarate dehydrogenase, mitochondrial (D2HGDH) from Bos taurus (Bovine).